Here is a 205-residue protein sequence, read N- to C-terminus: Large ribosomal subunit protein bL25 (205 aa).

Residues 184–205 (QPAGAVSEAAEGGEAAGETPAA) form a disordered region. The segment covering 186–205 (AGAVSEAAEGGEAAGETPAA) has biased composition (low complexity).

Belongs to the bacterial ribosomal protein bL25 family. CTC subfamily. As to quaternary structure, part of the 50S ribosomal subunit; part of the 5S rRNA/L5/L18/L25 subcomplex. Contacts the 5S rRNA. Binds to the 5S rRNA independently of L5 and L18.

Functionally, this is one of the proteins that binds to the 5S RNA in the ribosome where it forms part of the central protuberance. The protein is Large ribosomal subunit protein bL25 of Cupriavidus necator (strain ATCC 17699 / DSM 428 / KCTC 22496 / NCIMB 10442 / H16 / Stanier 337) (Ralstonia eutropha).